Here is a 561-residue protein sequence, read N- to C-terminus: DNA ligase B (561 aa).

Residue Lys128 is the N6-AMP-lysine intermediate of the active site.

This sequence belongs to the NAD-dependent DNA ligase family. LigB subfamily.

It carries out the reaction NAD(+) + (deoxyribonucleotide)n-3'-hydroxyl + 5'-phospho-(deoxyribonucleotide)m = (deoxyribonucleotide)n+m + AMP + beta-nicotinamide D-nucleotide.. Catalyzes the formation of phosphodiester linkages between 5'-phosphoryl and 3'-hydroxyl groups in double-stranded DNA using NAD as a coenzyme and as the energy source for the reaction. The protein is DNA ligase B of Pseudomonas syringae pv. syringae (strain B728a).